Here is a 487-residue protein sequence, read N- to C-terminus: Protein Optix (487 aa).

The homeobox DNA-binding region spans 154–214 (WDGEQKTHCF…KNRRQRDRAA (61 aa)). 2 disordered regions span residues 182–330 (NPTK…GAGP) and 443–463 (ASVGGGGGNQHHEPTTTGYHH). The segment covering 255-277 (GTHSPVPSSLQLQHSPGSTSNGA) has biased composition (polar residues). Over residues 278–293 (NDREESLSVDDDKPRD) the composition is skewed to basic and acidic residues. A compositionally biased stretch (low complexity) spans 294–312 (LSGSLPLPLSLPLPLASPT). Residues 321 to 330 (GYGGGAGAGP) are compositionally biased toward gly residues.

Belongs to the SIX/Sine oculis homeobox family. Expressed during early development of the head. First expressed in a band around the anterior end of stage 5 blastoderm embryo, at 93% to 85% egg length. By gastrula stage, site of expression shifts to the dorsal-anterior region. At stage 12, expression is found in the clypeolabrum, the stomodaeum, and in ectoderm dorsal to the future supraesophageal ganglion.

It is found in the nucleus. Functionally, may be involved in head or eye development; development of the clypeolabrum and several head sensory organs. The polypeptide is Protein Optix (Optix) (Drosophila melanogaster (Fruit fly)).